The following is a 387-amino-acid chain: Succinate--CoA ligase [ADP-forming] subunit beta (387 aa).

Residues 9–244 enclose the ATP-grasp domain; that stretch reads KALLQRYGVN…WSQDDAKEAE (236 aa). ATP contacts are provided by residues Lys46, 53–55, Glu99, Leu102, and Glu107; that span reads GRG. The Mg(2+) site is built by Asn199 and Asp213. Substrate is bound by residues Asn264 and 321–323; that span reads GIM.

It belongs to the succinate/malate CoA ligase beta subunit family. As to quaternary structure, heterotetramer of two alpha and two beta subunits. It depends on Mg(2+) as a cofactor.

The catalysed reaction is succinate + ATP + CoA = succinyl-CoA + ADP + phosphate. The enzyme catalyses GTP + succinate + CoA = succinyl-CoA + GDP + phosphate. Its pathway is carbohydrate metabolism; tricarboxylic acid cycle; succinate from succinyl-CoA (ligase route): step 1/1. Its function is as follows. Succinyl-CoA synthetase functions in the citric acid cycle (TCA), coupling the hydrolysis of succinyl-CoA to the synthesis of either ATP or GTP and thus represents the only step of substrate-level phosphorylation in the TCA. The beta subunit provides nucleotide specificity of the enzyme and binds the substrate succinate, while the binding sites for coenzyme A and phosphate are found in the alpha subunit. The sequence is that of Succinate--CoA ligase [ADP-forming] subunit beta from Methylobacillus flagellatus (strain ATCC 51484 / DSM 6875 / VKM B-1610 / KT).